The sequence spans 141 residues: ATP synthase epsilon chain (141 aa).

Belongs to the ATPase epsilon chain family. F-type ATPases have 2 components, CF(1) - the catalytic core - and CF(0) - the membrane proton channel. CF(1) has five subunits: alpha(3), beta(3), gamma(1), delta(1), epsilon(1). CF(0) has three main subunits: a, b and c.

Its subcellular location is the cell inner membrane. Produces ATP from ADP in the presence of a proton gradient across the membrane. The sequence is that of ATP synthase epsilon chain from Pseudomonas syringae pv. syringae (strain B728a).